A 357-amino-acid polypeptide reads, in one-letter code: Glycerol-3-phosphate dehydrogenase [NAD(P)+] (357 aa).

The NADPH site is built by S30, F31, R51, and K124. 2 residues coordinate sn-glycerol 3-phosphate: K124 and G152. A156 contributes to the NADPH binding site. 5 residues coordinate sn-glycerol 3-phosphate: K207, D260, S270, R271, and N272. K207 functions as the Proton acceptor in the catalytic mechanism. R271 provides a ligand contact to NADPH. E297 contacts NADPH.

It belongs to the NAD-dependent glycerol-3-phosphate dehydrogenase family.

It is found in the cytoplasm. The enzyme catalyses sn-glycerol 3-phosphate + NAD(+) = dihydroxyacetone phosphate + NADH + H(+). It carries out the reaction sn-glycerol 3-phosphate + NADP(+) = dihydroxyacetone phosphate + NADPH + H(+). It participates in membrane lipid metabolism; glycerophospholipid metabolism. Its function is as follows. Catalyzes the reduction of the glycolytic intermediate dihydroxyacetone phosphate (DHAP) to sn-glycerol 3-phosphate (G3P), the key precursor for phospholipid synthesis. This is Glycerol-3-phosphate dehydrogenase [NAD(P)+] from Acinetobacter baumannii (strain AB307-0294).